Consider the following 891-residue polypeptide: DNA mismatch repair protein MutS (891 aa).

An ATP-binding site is contributed by 646–653 (GPNMAGKS).

The protein belongs to the DNA mismatch repair MutS family.

In terms of biological role, this protein is involved in the repair of mismatches in DNA. It is possible that it carries out the mismatch recognition step. This protein has a weak ATPase activity. The sequence is that of DNA mismatch repair protein MutS from Rickettsia canadensis (strain McKiel).